A 1538-amino-acid polypeptide reads, in one-letter code: Pentafunctional AROM polypeptide (1538 aa).

The interval 1–384 (MGVPTKISIL…HEPRASTVSN (384 aa)) is 3-dehydroquinate synthase. NAD(+)-binding positions include 44–46 (DTN), 81–84 (ESSK), 114–116 (GGV), and Asp-119. A 7-phospho-2-dehydro-3-deoxy-D-arabino-heptonate-binding site is contributed by Arg-130. An NAD(+)-binding site is contributed by 139–140 (TT). Residues Asp-146 and Lys-152 each contribute to the 7-phospho-2-dehydro-3-deoxy-D-arabino-heptonate site. Residue Lys-161 coordinates NAD(+). Asn-162 contributes to the 7-phospho-2-dehydro-3-deoxy-D-arabino-heptonate binding site. NAD(+) is bound by residues 179-182 (FLNT) and Asn-190. Glu-194 is a binding site for Zn(2+). 7-phospho-2-dehydro-3-deoxy-D-arabino-heptonate is bound by residues 194–197 (EVIK) and Lys-250. Glu-260 acts as the Proton acceptor; for 3-dehydroquinate synthase activity in catalysis. Residues 264 to 268 (RNLLN) and His-271 each bind 7-phospho-2-dehydro-3-deoxy-D-arabino-heptonate. His-271 contributes to the Zn(2+) binding site. His-275 serves as the catalytic Proton acceptor; for 3-dehydroquinate synthase activity. Residues His-287 and Lys-356 each contribute to the 7-phospho-2-dehydro-3-deoxy-D-arabino-heptonate site. Zn(2+) is bound at residue His-287. The interval 397–842 (VSPGVPKGLD…WDCLSQTFKV (446 aa)) is EPSP synthase. Residue Cys-824 is the For EPSP synthase activity of the active site. The segment at 866-973 (ASIFIIGMRG…RRKQNTFFVS (108 aa)) is shikimate kinase. Residue 872–879 (GMRGAGKT) coordinates ATP. Residues 974–1194 (LTLPDLGLAA…AAPGQLSARE (221 aa)) are 3-dehydroquinase. The active-site Proton acceptor; for 3-dehydroquinate dehydratase activity is the His-1097. The active-site Schiff-base intermediate with substrate; for 3-dehydroquinate dehydratase activity is the Lys-1125. The shikimate dehydrogenase stretch occupies residues 1207 to 1538 (AKKFAVIGNP…YEHPVLNHSS (332 aa)).

In the N-terminal section; belongs to the sugar phosphate cyclases superfamily. Dehydroquinate synthase family. This sequence in the 2nd section; belongs to the EPSP synthase family. The protein in the 3rd section; belongs to the shikimate kinase family. It in the 4th section; belongs to the type-I 3-dehydroquinase family. In the C-terminal section; belongs to the shikimate dehydrogenase family. Homodimer. Requires Zn(2+) as cofactor.

The protein resides in the cytoplasm. It catalyses the reaction 7-phospho-2-dehydro-3-deoxy-D-arabino-heptonate = 3-dehydroquinate + phosphate. The catalysed reaction is 3-dehydroquinate = 3-dehydroshikimate + H2O. The enzyme catalyses shikimate + NADP(+) = 3-dehydroshikimate + NADPH + H(+). It carries out the reaction shikimate + ATP = 3-phosphoshikimate + ADP + H(+). It catalyses the reaction 3-phosphoshikimate + phosphoenolpyruvate = 5-O-(1-carboxyvinyl)-3-phosphoshikimate + phosphate. It functions in the pathway metabolic intermediate biosynthesis; chorismate biosynthesis; chorismate from D-erythrose 4-phosphate and phosphoenolpyruvate: step 2/7. The protein operates within metabolic intermediate biosynthesis; chorismate biosynthesis; chorismate from D-erythrose 4-phosphate and phosphoenolpyruvate: step 3/7. It participates in metabolic intermediate biosynthesis; chorismate biosynthesis; chorismate from D-erythrose 4-phosphate and phosphoenolpyruvate: step 4/7. Its pathway is metabolic intermediate biosynthesis; chorismate biosynthesis; chorismate from D-erythrose 4-phosphate and phosphoenolpyruvate: step 5/7. It functions in the pathway metabolic intermediate biosynthesis; chorismate biosynthesis; chorismate from D-erythrose 4-phosphate and phosphoenolpyruvate: step 6/7. Its function is as follows. The AROM polypeptide catalyzes 5 consecutive enzymatic reactions in prechorismate polyaromatic amino acid biosynthesis. This chain is Pentafunctional AROM polypeptide, found in Ajellomyces capsulatus (strain NAm1 / WU24) (Darling's disease fungus).